The chain runs to 465 residues: MQLDKKIINHVHCLGIGGIGVSALAEILLKKGCRVTGSDVSPNKNTERLQRLGAEIIFNHDGTAITQADCAVYSSAIGATNPELMAAKQAKIPLLKRGEMLANLMKEYQSIAVAGAHGKTTTSGMLSHAFVEANLDPTFMVGGVLNNSQTPARVGNGHYFIAEADESDASFLFMHPDIAVVTNIDADHLSTYDGDFNRLKQTYIQFLEQTAQDGVVVLCLDDPILREIAPLLSRRVITYGFSSDAQYRVVDYCQQGIQSLFQIHSPQRKAPLTVKLSMPGQHNALNATAVTAIADVVQMNEPALLKSLADFPGVDRRFTIRGEMILPKGNALIIEDYGHHPNEIKATLAAARAAWPERRMVLVFQPHRYSRTRDLMTEFVSVLAETDWLVLLEVYSAGEMPIPGADGMALIKMMSNGMAQKTTFVPLLQNLPETLQKLSQPNDIIILQGAGNIGSIVTALVQTHG.

Residue 115-121 (GAHGKTT) participates in ATP binding.

It belongs to the MurCDEF family.

Its subcellular location is the cytoplasm. The enzyme catalyses UDP-N-acetyl-alpha-D-muramate + L-alanine + ATP = UDP-N-acetyl-alpha-D-muramoyl-L-alanine + ADP + phosphate + H(+). The protein operates within cell wall biogenesis; peptidoglycan biosynthesis. In terms of biological role, cell wall formation. This chain is UDP-N-acetylmuramate--L-alanine ligase, found in Coxiella burnetii (strain Dugway 5J108-111).